Reading from the N-terminus, the 568-residue chain is Urease subunit alpha (568 aa).

One can recognise a Urease domain in the interval Gly133–Phe568. His138, His140, and Lys221 together coordinate Ni(2+). An N6-carboxylysine modification is found at Lys221. His223 serves as a coordination point for substrate. 2 residues coordinate Ni(2+): His250 and His276. His324 acts as the Proton donor in catalysis. A Ni(2+)-binding site is contributed by Asp364.

It belongs to the metallo-dependent hydrolases superfamily. Urease alpha subunit family. As to quaternary structure, heterohexamer of 3 UreC (alpha) and 3 UreAB (gamma/beta) subunits. Ni cation is required as a cofactor. In terms of processing, carboxylation allows a single lysine to coordinate two nickel ions.

It localises to the cytoplasm. It catalyses the reaction urea + 2 H2O + H(+) = hydrogencarbonate + 2 NH4(+). The protein operates within nitrogen metabolism; urea degradation; CO(2) and NH(3) from urea (urease route): step 1/1. The polypeptide is Urease subunit alpha (Deinococcus radiodurans (strain ATCC 13939 / DSM 20539 / JCM 16871 / CCUG 27074 / LMG 4051 / NBRC 15346 / NCIMB 9279 / VKM B-1422 / R1)).